A 283-amino-acid chain; its full sequence is MAAPVGRTLLGLARGWRQLDRFWAGSSRGLSLEAASSSSRSPWRLSGALCLQRPPLITKALTPLQEEMAGLLQQIEVERSLYSDHELRALDEAQRLAKKKADLYDEEQEQGITLAQDLEDMWEQAFLQFRPGARETEADKKNDRTSLHRKLDRNLVLLVREKLGDQDVWMLPQVEWQPGETLRGTAERILATLSENNMEAKFLGNAPCGHYKFKFPKAIQTESDLGVKVFFFKALLLTGDFVQAGKKSRHVWASKEELGDYLQPKYLAQVRRFLLDSDGLSCL.

N6-succinyllysine is present on K217. The residue at position 228 (K228) is an N6-acetyllysine. Position 246 is an N6-succinyllysine (K246).

Belongs to the mitochondrion-specific ribosomal protein mL46 family. In terms of assembly, component of the mitochondrial ribosome large subunit (39S) which comprises a 16S rRNA and about 50 distinct proteins.

It is found in the mitochondrion. This is Large ribosomal subunit protein mL46 (Mrpl46) from Mus musculus (Mouse).